The chain runs to 92 residues: Large ribosomal subunit protein bL28 (92 aa).

It belongs to the bacterial ribosomal protein bL28 family.

The sequence is that of Large ribosomal subunit protein bL28 from Borreliella afzelii (strain PKo) (Borrelia afzelii).